Consider the following 122-residue polypeptide: Large ribosomal subunit protein uL18 (122 aa).

Positions 1 to 25 are disordered; sequence MSQISRKQQTQKRHRRLRRHITGTS. Residues 9-21 show a composition bias toward basic residues; that stretch reads QTQKRHRRLRRHI.

This sequence belongs to the universal ribosomal protein uL18 family. In terms of assembly, part of the 50S ribosomal subunit; part of the 5S rRNA/L5/L18/L25 subcomplex. Contacts the 5S and 23S rRNAs.

Its function is as follows. This is one of the proteins that bind and probably mediate the attachment of the 5S RNA into the large ribosomal subunit, where it forms part of the central protuberance. The protein is Large ribosomal subunit protein uL18 of Synechococcus sp. (strain CC9605).